The primary structure comprises 175 residues: Transcription factor E (175 aa).

Residues 3–88 (ENPLIQQVLF…TWKPSLEKVP (86 aa)) enclose the HTH TFE/IIEalpha-type domain.

The protein belongs to the TFE family. Monomer. Interaction with RNA polymerase subunits RpoF and RpoE is necessary for Tfe stimulatory transcription activity. Able to interact with Tbp and RNA polymerase in the absence of DNA promoter. Interacts both with the preinitiation and elongation complexes.

Functionally, transcription factor that plays a role in the activation of archaeal genes transcribed by RNA polymerase. Facilitates transcription initiation by enhancing TATA-box recognition by TATA-box-binding protein (Tbp), and transcription factor B (Tfb) and RNA polymerase recruitment. Not absolutely required for transcription in vitro, but particularly important in cases where Tbp or Tfb function is not optimal. It dynamically alters the nucleic acid-binding properties of RNA polymerases by stabilizing the initiation complex and destabilizing elongation complexes. Seems to translocate with the RNA polymerase following initiation and acts by binding to the non template strand of the transcription bubble in elongation complexes. The polypeptide is Transcription factor E (Methanococcus maripaludis (strain C7 / ATCC BAA-1331)).